Consider the following 396-residue polypeptide: Imidazolonepropionase (396 aa).

Fe(3+)-binding residues include His70 and His72. Zn(2+) contacts are provided by His70 and His72. 4-imidazolone-5-propanoate is bound by residues Arg79, Tyr137, and His164. Tyr137 provides a ligand contact to N-formimidoyl-L-glutamate. His227 contacts Fe(3+). Position 227 (His227) interacts with Zn(2+). Gln230 provides a ligand contact to 4-imidazolone-5-propanoate. Asp301 contacts Fe(3+). Residue Asp301 coordinates Zn(2+). N-formimidoyl-L-glutamate contacts are provided by Asn303 and Gly305. A 4-imidazolone-5-propanoate-binding site is contributed by Ser306.

The protein belongs to the metallo-dependent hydrolases superfamily. HutI family. Requires Zn(2+) as cofactor. It depends on Fe(3+) as a cofactor.

Its subcellular location is the cytoplasm. It catalyses the reaction 4-imidazolone-5-propanoate + H2O = N-formimidoyl-L-glutamate. It participates in amino-acid degradation; L-histidine degradation into L-glutamate; N-formimidoyl-L-glutamate from L-histidine: step 3/3. In terms of biological role, catalyzes the hydrolytic cleavage of the carbon-nitrogen bond in imidazolone-5-propanoate to yield N-formimidoyl-L-glutamate. It is the third step in the universal histidine degradation pathway. The sequence is that of Imidazolonepropionase from Mycolicibacterium smegmatis (strain ATCC 700084 / mc(2)155) (Mycobacterium smegmatis).